Reading from the N-terminus, the 299-residue chain is MTEHKSGFVSIIGRPNVGKSTFVNRVIGHKIAIMSDKAQTTRNKIQGVMTRDDAQIIFIDTPGIHKPKHKLGDYMMRVAKNTLSEIDAIMFMVNVNEDIGRGDEYIMEMLKNVKTPIFLVLNKIDLVHPDTLMPKIEQYQSYMDFTDIIPISALEGLNVDHFIDVLKSFLPEGPKYYPDNQISDHPEQFVVSEIIREKILHLTSEEIPHAIGVNVDRMIKEDEDRVRIEATIYVERDSQKGIVIGKGGKKLKEVGKRARRDIEMLLGSKVYLELWVKVQRDWRNKVNFIRQIGYVEDQD.

Residues 5 to 172 (KSGFVSIIGR…IDVLKSFLPE (168 aa)) form the Era-type G domain. The G1 stretch occupies residues 13–20 (GRPNVGKS). Position 13–20 (13–20 (GRPNVGKS)) interacts with GTP. Residues 39–43 (QTTRN) are G2. Residues 60-63 (DTPG) form a G3 region. Residues 60–64 (DTPGI) and 122–125 (NKID) contribute to the GTP site. The interval 122 to 125 (NKID) is G4. A G5 region spans residues 151-153 (ISA). Residues 203–280 (TSEEIPHAIG…YLELWVKVQR (78 aa)) enclose the KH type-2 domain.

The protein belongs to the TRAFAC class TrmE-Era-EngA-EngB-Septin-like GTPase superfamily. Era GTPase family. In terms of assembly, monomer.

The protein resides in the cytoplasm. It is found in the cell membrane. In terms of biological role, an essential GTPase that binds both GDP and GTP, with rapid nucleotide exchange. Plays a role in 16S rRNA processing and 30S ribosomal subunit biogenesis and possibly also in cell cycle regulation and energy metabolism. This Staphylococcus epidermidis (strain ATCC 12228 / FDA PCI 1200) protein is GTPase Era.